The sequence spans 25 residues: Toxin LyeTx 1 (25 aa).

At Leu25 the chain carries Leucine amide.

As to expression, expressed by the venom gland.

The protein localises to the secreted. Has antimicrobial activity against Gram-positive bacterium S.aureus (MIC=3.79 uM), Gram-negative bacterium E.coli (MIC=7.81 uM) and yeasts C.krusei (MIC=26.3 uM) and C.neoformans (MIC=13.2 uM). Has hemolytic activity against rabbit erythrocytes. Forms pores in lipid bilayers in vitro; pore formation is reduced when cholesterol is present in the bilayers. The protein is Toxin LyeTx 1 of Lycosa erythrognatha (Wolf spider).